We begin with the raw amino-acid sequence, 273 residues long: Dermonecrotic toxin LhSicTox-alphaIA2av (273 aa).

Residue histidine 5 is part of the active site. Mg(2+) is bound by residues glutamate 25 and aspartate 27. Histidine 41 (nucleophile) is an active-site residue. Cystine bridges form between cysteine 45–cysteine 51 and cysteine 47–cysteine 190. Aspartate 85 is a binding site for Mg(2+).

This sequence belongs to the arthropod phospholipase D family. Class II subfamily. Mg(2+) is required as a cofactor. As to expression, expressed by the venom gland.

The protein resides in the secreted. The enzyme catalyses an N-(acyl)-sphingosylphosphocholine = an N-(acyl)-sphingosyl-1,3-cyclic phosphate + choline. The catalysed reaction is an N-(acyl)-sphingosylphosphoethanolamine = an N-(acyl)-sphingosyl-1,3-cyclic phosphate + ethanolamine. It catalyses the reaction a 1-acyl-sn-glycero-3-phosphocholine = a 1-acyl-sn-glycero-2,3-cyclic phosphate + choline. It carries out the reaction a 1-acyl-sn-glycero-3-phosphoethanolamine = a 1-acyl-sn-glycero-2,3-cyclic phosphate + ethanolamine. Its function is as follows. Dermonecrotic toxins cleave the phosphodiester linkage between the phosphate and headgroup of certain phospholipids (sphingolipid and lysolipid substrates), forming an alcohol (often choline) and a cyclic phosphate. This toxin acts on sphingomyelin (SM). It may also act on ceramide phosphoethanolamine (CPE), lysophosphatidylcholine (LPC) and lysophosphatidylethanolamine (LPE), but not on lysophosphatidylserine (LPS), and lysophosphatidylglycerol (LPG). It acts by transphosphatidylation, releasing exclusively cyclic phosphate products as second products. Induces dermonecrosis, hemolysis, increased vascular permeability, edema, inflammatory response, and platelet aggregation. The protein is Dermonecrotic toxin LhSicTox-alphaIA2av of Loxosceles hirsuta (Recluse spider).